Here is a 1330-residue protein sequence, read N- to C-terminus: Paired amphipathic helix protein Sin3-like 3 (1330 aa).

PAH domains are found at residues 8-78 (QKLT…LPKG) and 94-164 (KRVE…LPDT). Over residues 191–246 (IITPHPDHDYGTEHIDQDRERPIKKENKEHMRGTNKENEHRDARDFEPHSKKEQFL) the composition is skewed to basic and acidic residues. The interval 191 to 281 (IITPHPDHDY…VPSSSTYDEK (91 aa)) is disordered. Polar residues predominate over residues 262-277 (ISNQSKLSGAVPSSST). One can recognise a PAH 3 domain in the interval 283–351 (AMKSYSQDLA…DSFIEFLVQC (69 aa)). Disordered stretches follow at residues 373–401 (GEGK…DRDH), 718–775 (NQNV…GRTS), 789–808 (KNVV…SIER), 882–906 (QEMA…FEED), and 920–1002 (SKAN…EAEC). Residues 383–401 (DNDRDQEHKRDDGLRDRDH) show a composition bias toward basic and acidic residues. Low complexity predominate over residues 723–734 (SGSSSAGESEGS). The span at 789 to 800 (KNVVTSDEKPES) shows a compositional bias: basic and acidic residues. Residues 920 to 932 (SKANDSTGNNISG) show a composition bias toward polar residues. Composition is skewed to basic and acidic residues over residues 933-949 (DRSR…RAEN) and 956-968 (NAAR…RNEY). Residues 980–989 (GGEDPEDDLD) show a composition bias toward acidic residues. The residue at position 996 (serine 996) is a Phosphoserine.

In terms of assembly, interacts with ERF7 and the histone deacetylase HDA19.

Its subcellular location is the nucleus. Functionally, acts as a transcriptional repressor. Interacts with ERF7 to repress genes in abscisic acid and drought stress responses. The heterodimer represses transcription by tethering SNL3 to DNA. The protein is Paired amphipathic helix protein Sin3-like 3 (SNL3) of Arabidopsis thaliana (Mouse-ear cress).